Here is a 711-residue protein sequence, read N- to C-terminus: DNA topoisomerase 3 (711 aa).

The Toprim domain maps to 2–135 (KSLILAEKPS…IRRLWISSVT (134 aa)). E8 and D104 together coordinate Mg(2+). One can recognise a Topo IA-type catalytic domain in the interval 152 to 580 (YNDLYYAALA…EMKDFTKDVV (429 aa)). The interaction with DNA stretch occupies residues 186 to 191 (SLGRVQ). Y305 acts as the O-(5'-phospho-DNA)-tyrosine intermediate in catalysis. The disordered stretch occupies residues 691–711 (MNKNEGLDNNPFKDALKNLNL).

It belongs to the type IA topoisomerase family. Mg(2+) is required as a cofactor.

It catalyses the reaction ATP-independent breakage of single-stranded DNA, followed by passage and rejoining.. Releases the supercoiling and torsional tension of DNA, which is introduced during the DNA replication and transcription, by transiently cleaving and rejoining one strand of the DNA duplex. Introduces a single-strand break via transesterification at a target site in duplex DNA. The scissile phosphodiester is attacked by the catalytic tyrosine of the enzyme, resulting in the formation of a DNA-(5'-phosphotyrosyl)-enzyme intermediate and the expulsion of a 3'-OH DNA strand. The free DNA strand then undergoes passage around the unbroken strand, thus removing DNA supercoils. Finally, in the religation step, the DNA 3'-OH attacks the covalent intermediate to expel the active-site tyrosine and restore the DNA phosphodiester backbone. This is DNA topoisomerase 3 from Staphylococcus aureus (strain Mu50 / ATCC 700699).